The chain runs to 1088 residues: RNA-directed RNA polymerase (1088 aa).

Positions L501–I687 constitute a RdRp catalytic domain.

The protein belongs to the reoviridae RNA-directed RNA polymerase family. As to quaternary structure, interacts with VP3 (Potential). Interacts with VP2; this interaction activates VP1. Interacts with NSP5; this interaction is probably necessary for the formation of functional virus factories. Interacts with NSP2; this interaction is weak. It depends on Mg(2+) as a cofactor.

It localises to the virion. The catalysed reaction is RNA(n) + a ribonucleoside 5'-triphosphate = RNA(n+1) + diphosphate. In terms of biological role, RNA-directed RNA polymerase that is involved in both transcription and genome replication. Together with VP3 capping enzyme, forms an enzyme complex positioned near the channels situated at each of the five-fold vertices of the core. Following infection, the outermost layer of the virus is lost, leaving a double-layered particle (DLP) made up of the core and VP6 shell. VP1 then catalyzes the transcription of fully conservative plus-strand genomic RNAs that are extruded through the DLP's channels into the cytoplasm where they function as mRNAs for translation of viral proteins. One copy of each of the viral (+)RNAs is also recruited during core assembly, together with newly synthesized polymerase complexes and VP2. The polymerase of these novo-formed particles catalyzes the synthesis of complementary minus-strands leading to dsRNA formation. To do so, the polymerase specifically recognizes and binds 4 bases 5'-UGUG-3' in the conserved 3'-sequence of plus-strand RNA templates. VP2 presumably activates the autoinhibited VP1-RNA complex to coordinate packaging and genome replication. Once dsRNA synthesis is complete, the polymerase switches to the transcriptional mode, thus providing secondary transcription. This chain is RNA-directed RNA polymerase, found in Rotavirus A (strain RVA/Pig/United States/Gottfried/1983/G4P2B[6]) (RV-A).